Consider the following 105-residue polypeptide: Large ribosomal subunit protein eL42 (105 aa).

The interval Lys23 to Ala61 is disordered.

Belongs to the eukaryotic ribosomal protein eL42 family.

This is Large ribosomal subunit protein eL42 from Caenorhabditis elegans.